A 702-amino-acid polypeptide reads, in one-letter code: MIHTLETTVAGRKMKVDFGKTGMLSNAAIFMSYGDTVVMINANASKEPREGIDFFPLSVDYEERLYSVGKIPGGFIKREGKPSDKSILHARSIDRPLRPLFPNGYRNDVQIVNTVLSVEQDNLPEILAINGSSLALCLSSIPFTTPVAAVSVGLVDGEFIINPTVAQRENTILDLTVCATKERIMMVEAGGQEIDEETMYNAILFGFEECKNIVAFQEEAVAKLGKTKDEQVLYKADEEVEKEVKRFAFDMIKEAMYIMDKDERNAQLDKVKEKISEEFSQKYEDKGADIKEVIYKTQKEIVRNMLLNEDRRPDGRAFDEVRPIGCEVGILPRTHGTGLFTRGLTQVMTVATLGALGDVQILDGIAEEESKRYMHHYNFPSYSVGEVRPLRGPGRREIGHGALAERALEPLIPSQEEFPYTIRLVSEVLSSNGSTSQASVCGSTLALLDAGVPIKRPAAGIAMGLITSDDLEREKVITDIQGIEDFFGDMDFKVAGTEKGITSIQFDTKIKGLSNSCVKDALEGAKKARLHILGKIKECIPEPRKELSKYAPRTEIICIDPEKIRDVIGAGGKVINKIIADTNVKIEIKEDGKIFVTSNNEPEGVKKAISIIEGLTKEVVQGEIYLGKVTKTTNFGAFVEILPGKEGLVHISKLDFARVEKVEDVVSVGDEILVKVTDIDNQGRINLSRKDAIAKKEEEKDK.

Asp485 and Asp491 together coordinate Mg(2+). Residues 552–612 (PRTEIICIDP…EGVKKAISII (61 aa)) form the KH domain. The S1 motif domain maps to 622–690 (GEIYLGKVTK…NQGRINLSRK (69 aa)).

It belongs to the polyribonucleotide nucleotidyltransferase family. Mg(2+) is required as a cofactor.

Its subcellular location is the cytoplasm. The enzyme catalyses RNA(n+1) + phosphate = RNA(n) + a ribonucleoside 5'-diphosphate. Involved in mRNA degradation. Catalyzes the phosphorolysis of single-stranded polyribonucleotides processively in the 3'- to 5'-direction. This chain is Polyribonucleotide nucleotidyltransferase, found in Clostridium botulinum (strain Langeland / NCTC 10281 / Type F).